Here is a 438-residue protein sequence, read N- to C-terminus: Na(+)/H(+) antiporter NhaA (438 aa).

11 helical membrane-spanning segments follow: residues 23–43, 62–82, 104–124, 133–153, 162–182, 185–205, 221–241, 302–322, 337–357, 372–392, and 410–430; these read FGGI…NSFL, FFIG…LFFL, SFPV…YFFL, GFGI…MLLG, VFLI…IALF, TNLK…LAVL, VLLW…AVIL, FLAP…NAGV, LGVI…ITFI, WWHI…SMFI, and IAIL…LFAL.

Belongs to the NhaA Na(+)/H(+) (TC 2.A.33) antiporter family.

It localises to the cell inner membrane. It catalyses the reaction Na(+)(in) + 2 H(+)(out) = Na(+)(out) + 2 H(+)(in). Functionally, na(+)/H(+) antiporter that extrudes sodium in exchange for external protons. The protein is Na(+)/H(+) antiporter NhaA of Helicobacter pylori (strain ATCC 700392 / 26695) (Campylobacter pylori).